Reading from the N-terminus, the 805-residue chain is Leucine--tRNA ligase (805 aa).

The short motif at 40–51 (PYPSGSGLHVGH) is the 'HIGH' region element. Positions 576 to 580 (KMSKS) match the 'KMSKS' region motif. K579 provides a ligand contact to ATP.

This sequence belongs to the class-I aminoacyl-tRNA synthetase family.

It is found in the cytoplasm. It carries out the reaction tRNA(Leu) + L-leucine + ATP = L-leucyl-tRNA(Leu) + AMP + diphosphate. The protein is Leucine--tRNA ligase of Chlorobium luteolum (strain DSM 273 / BCRC 81028 / 2530) (Pelodictyon luteolum).